We begin with the raw amino-acid sequence, 427 residues long: Adenylosuccinate synthetase (427 aa).

Residues 12–18 and 40–42 each bind GTP; these read GDEGKGK and GHT. The active-site Proton acceptor is the D13. Residues D13 and G40 each contribute to the Mg(2+) site. Residues 13 to 16, 38 to 41, T128, R142, Q223, T238, and R302 each bind IMP; these read DEGK and NAGH. Residue H41 is the Proton donor of the active site. 298–304 serves as a coordination point for substrate; sequence VTTGRAR. GTP is bound by residues R304, 330 to 332, and 412 to 414; these read KLD and GVG.

Belongs to the adenylosuccinate synthetase family. As to quaternary structure, homodimer. Mg(2+) serves as cofactor.

It localises to the cytoplasm. It catalyses the reaction IMP + L-aspartate + GTP = N(6)-(1,2-dicarboxyethyl)-AMP + GDP + phosphate + 2 H(+). Its pathway is purine metabolism; AMP biosynthesis via de novo pathway; AMP from IMP: step 1/2. Functionally, plays an important role in the de novo pathway of purine nucleotide biosynthesis. Catalyzes the first committed step in the biosynthesis of AMP from IMP. The sequence is that of Adenylosuccinate synthetase from Parafrankia sp. (strain EAN1pec).